A 359-amino-acid chain; its full sequence is Protein-L-isoaspartate O-methyltransferase domain-containing protein 2 (359 aa).

Glycine 2 is lipidated: N-myristoyl glycine. Residue serine 64 is part of the active site. AdoMet binding motif stretches follow at residues 85-94 (LNLGSGTGYL), 160-164 (YDRVY), and 181-191 (LKVGGILVMPL). Residues 240-250 (VRSLQDLARLA) form a BC-box region. Residues 301–328 (SNPSDDTSCEDAEEDRREVAERTLQETK) are disordered. Over residues 314–328 (EDRREVAERTLQETK) the composition is skewed to basic and acidic residues. Positions 343 to 346 (LPLP) are CUL-box.

The protein belongs to the methyltransferase superfamily. L-isoaspartyl/D-aspartyl protein methyltransferase family.

The protein resides in the cytoplasm. May act as a substrate recognition component of an ECS (Elongin BC-CUL5-SOCS-box protein) E3 ubiquitin ligase complex which mediates the ubiquitination and subsequent proteasomal degradation of target proteins. May bind to the methyltransferase cofactor S-adenosylmethionine (AdoMet) via the N-terminal AdoMet binding motif, but probably does not display methyltransferase activity. The sequence is that of Protein-L-isoaspartate O-methyltransferase domain-containing protein 2 (Pcmtd2) from Mus musculus (Mouse).